A 125-amino-acid chain; its full sequence is Large ribosomal subunit protein bL19 (125 aa).

The protein belongs to the bacterial ribosomal protein bL19 family.

Its function is as follows. This protein is located at the 30S-50S ribosomal subunit interface and may play a role in the structure and function of the aminoacyl-tRNA binding site. In Synechococcus sp. (strain JA-2-3B'a(2-13)) (Cyanobacteria bacterium Yellowstone B-Prime), this protein is Large ribosomal subunit protein bL19.